The sequence spans 271 residues: ATP synthase subunit a (271 aa).

A run of 5 helical transmembrane segments spans residues 40-60 (TINIDSMFFSVGLGLLFLVLF), 100-120 (LIAPLALTIFVWVFLMNLMDL), 146-166 (DVNVTLSMALGVFILILFYSI), 220-240 (LIFILIAGLLPWWSQWILNVP), and 242-262 (AIFHILIITLQAFIFMVLTIV).

This sequence belongs to the ATPase A chain family. As to quaternary structure, F-type ATPases have 2 components, CF(1) - the catalytic core - and CF(0) - the membrane proton channel. CF(1) has five subunits: alpha(3), beta(3), gamma(1), delta(1), epsilon(1). CF(0) has three main subunits: a(1), b(2) and c(9-12). The alpha and beta chains form an alternating ring which encloses part of the gamma chain. CF(1) is attached to CF(0) by a central stalk formed by the gamma and epsilon chains, while a peripheral stalk is formed by the delta and b chains.

It localises to the cell inner membrane. Its function is as follows. Key component of the proton channel; it plays a direct role in the translocation of protons across the membrane. This is ATP synthase subunit a from Shigella dysenteriae serotype 1 (strain Sd197).